The sequence spans 384 residues: Ribosomal RNA small subunit methyltransferase H (384 aa).

S-adenosyl-L-methionine-binding positions include 99-101 (GGH), Asp118, Tyr145, Asp169, and Gln176.

Belongs to the methyltransferase superfamily. RsmH family.

The protein resides in the cytoplasm. It carries out the reaction cytidine(1402) in 16S rRNA + S-adenosyl-L-methionine = N(4)-methylcytidine(1402) in 16S rRNA + S-adenosyl-L-homocysteine + H(+). Its function is as follows. Specifically methylates the N4 position of cytidine in position 1402 (C1402) of 16S rRNA. The sequence is that of Ribosomal RNA small subunit methyltransferase H from Mycobacteroides abscessus (strain ATCC 19977 / DSM 44196 / CCUG 20993 / CIP 104536 / JCM 13569 / NCTC 13031 / TMC 1543 / L948) (Mycobacterium abscessus).